A 180-amino-acid polypeptide reads, in one-letter code: Riboflavin kinase (180 aa).

Mg(2+)-binding residues include T40 and N42. The active-site Nucleophile is E117.

It belongs to the flavokinase family. The cofactor is Zn(2+). Mg(2+) is required as a cofactor.

The enzyme catalyses riboflavin + ATP = FMN + ADP + H(+). It functions in the pathway cofactor biosynthesis; FMN biosynthesis; FMN from riboflavin (ATP route): step 1/1. Its function is as follows. Catalyzes the phosphorylation of riboflavin (vitamin B2) to form flavin mononucleotide (FMN) coenzyme. This is Riboflavin kinase (FMN1) from Meyerozyma guilliermondii (strain ATCC 6260 / CBS 566 / DSM 6381 / JCM 1539 / NBRC 10279 / NRRL Y-324) (Yeast).